A 463-amino-acid chain; its full sequence is Fumarate hydratase class II (463 aa).

Residues 97–99, 128–131, 138–140, and Thr-186 each bind substrate; these read SGT, HPND, and SSN. The Proton donor/acceptor role is filled by His-187. Residue Ser-317 is part of the active site. Residues Ser-318 and 323–325 contribute to the substrate site; that span reads KVN.

Belongs to the class-II fumarase/aspartase family. Fumarase subfamily. Homotetramer.

The protein resides in the cytoplasm. It carries out the reaction (S)-malate = fumarate + H2O. The protein operates within carbohydrate metabolism; tricarboxylic acid cycle; (S)-malate from fumarate: step 1/1. Its function is as follows. Involved in the TCA cycle. Catalyzes the stereospecific interconversion of fumarate to L-malate. The protein is Fumarate hydratase class II of Helicobacter pylori (strain ATCC 700392 / 26695) (Campylobacter pylori).